The chain runs to 482 residues: Probable F-box protein At1g30780 (482 aa).

Positions Glu230 to Ser280 constitute an F-box domain.

This Arabidopsis thaliana (Mouse-ear cress) protein is Probable F-box protein At1g30780.